The chain runs to 359 residues: Cytokine receptor-like factor 2 (359 aa).

Residues 1–19 (MAWALAVILLPRLLAAAAA) form the signal peptide. The Extracellular portion of the chain corresponds to 20 to 232 (AAAVTSRGDV…PAPSPALAPP (213 aa)). A glycan (N-linked (GlcNAc...) asparagine) is linked at asparagine 53. A disulfide bond links cysteine 68 and cysteine 82. In terms of domain architecture, Fibronectin type-III spans 119-213 (PPWNVTLLWT…WTAVTRLSGA (95 aa)). N-linked (GlcNAc...) asparagine glycosylation is present at asparagine 122. Intrachain disulfides connect cysteine 168-cysteine 169 and cysteine 181-cysteine 219. The WSXWS motif motif lies at 201-205 (PSEWT). Residues 233–253 (LLPLGCGLAALLTLSLLLAAL) traverse the membrane as a helical segment. Residues 254-359 (RLRRVKDALL…MVGDSGYMTL (106 aa)) are Cytoplasmic-facing. A Box 1 motif motif is present at residues 262–270 (LLPCVPDPS). Residues 312-336 (KRVEPEDGTSLCTVPRPPSFEPRGP) form a disordered region.

It belongs to the type I cytokine receptor family. Type 5 subfamily. In terms of assembly, the TSLP receptor is a heterodimer of CRLF2 and IL7R. Binding of TSLP to CRLF2/TSLPR is a mechanistic prerequisite for recruitment of IL7R to the high-affinity ternary complex. As to expression, high level of expression in liver, lung and testis. Also expressed in heart, brain, spleen, thymus and bone marrow. Highly expressed in progenitors and myeloid cells. Isoform 2 is expressed in primary hemotopoietic cells.

It is found in the cell membrane. It localises to the secreted. Receptor for thymic stromal lymphopoietin (TSLP). Forms a functional complex with TSLP and IL7R which is capable of stimulating cell proliferation through activation of STAT3 and STAT5. Also activates JAK2. Implicated in the development of the hematopoietic system. This is Cytokine receptor-like factor 2 (Crlf2) from Mus musculus (Mouse).